We begin with the raw amino-acid sequence, 190 residues long: Guanylate kinase (190 aa).

Residues 3 to 185 enclose the Guanylate kinase-like domain; sequence NYIFIISAPS…SLEQLCKYFE (183 aa). 10–17 contributes to the ATP binding site; that stretch reads APSGAGKS.

This sequence belongs to the guanylate kinase family.

Its subcellular location is the cytoplasm. The enzyme catalyses GMP + ATP = GDP + ADP. Functionally, essential for recycling GMP and indirectly, cGMP. This is Guanylate kinase from Francisella tularensis subsp. holarctica (strain OSU18).